Reading from the N-terminus, the 82-residue chain is Protein Rv1078A (82 aa).

The segment covering G35–D54 has biased composition (basic residues). Residues G35–T82 form a disordered region.

It localises to the cytoplasm. In Mycobacterium tuberculosis (strain ATCC 25618 / H37Rv), this protein is Protein Rv1078A.